A 369-amino-acid chain; its full sequence is uncharacterized protein (369 aa).

The protein to A.pernix APE1276 and APE1804.

This is an uncharacterized protein from Saccharolobus solfataricus (strain ATCC 35092 / DSM 1617 / JCM 11322 / P2) (Sulfolobus solfataricus).